A 1677-amino-acid polypeptide reads, in one-letter code: Zinc finger protein 831 (1677 aa).

Residues 1 to 26 are compositionally biased toward pro residues; the sequence is MEVPEPTCPAPPARDQPAPTPGPPGA. The tract at residues 1 to 43 is disordered; it reads MEVPEPTCPAPPARDQPAPTPGPPGAPGGQASPHLTLGPVLLP. C2H2-type zinc fingers lie at residues 144–166 and 172–196; these read YLCP…IRSH and FPCA…TQTH. Disordered stretches follow at residues 193-250, 270-398, 516-557, 663-931, 950-1062, 1100-1119, 1137-1176, 1216-1243, 1510-1597, and 1620-1677; these read TQTH…SPGA, GSAF…AGLE, WLEP…PSGH, EAAG…VLSA, TPLP…TCEA, NWEL…SGPL, LTRP…PFPS, LRDE…GPAQ, SAES…GQYG, and LITR…VIEI. Composition is skewed to basic and acidic residues over residues 216–232 and 325–341; these read EGDK…RGES and KPWD…KCES. Positions 376 to 385 are enriched in gly residues; that stretch reads EGGPGPGPGV. A coiled-coil region spans residues 391–423; sequence GAREAGLELEKKRLEERIAQLISHNQAVVDDAQ. 4 stretches are compositionally biased toward basic and acidic residues: residues 517–526, 674–684, 707–727, and 813–834; these read LEPREPRDPW, QDRRTPVHEDI, PTKH…RVEE, and SGED…HSWK. 2 stretches are compositionally biased toward low complexity: residues 880-894 and 905-919; these read LESS…SVAL and PLHP…HPSL. Residues 1153–1170 are compositionally biased toward low complexity; the sequence is SSHSGTSRSHSTRSPHST. The segment covering 1518–1531 has biased composition (polar residues); sequence QTAGRTLTSSSPDS. The segment covering 1649–1662 has biased composition (basic and acidic residues); sequence RSLEGMRKQTRVEF.

The polypeptide is Zinc finger protein 831 (ZNF831) (Homo sapiens (Human)).